A 262-amino-acid chain; its full sequence is Hydroxyethylthiazole kinase (262 aa).

Met50 serves as a coordination point for substrate. The ATP site is built by Arg125 and Thr171. Gly198 is a binding site for substrate.

Belongs to the Thz kinase family. Mg(2+) serves as cofactor.

The catalysed reaction is 5-(2-hydroxyethyl)-4-methylthiazole + ATP = 4-methyl-5-(2-phosphooxyethyl)-thiazole + ADP + H(+). The protein operates within cofactor biosynthesis; thiamine diphosphate biosynthesis; 4-methyl-5-(2-phosphoethyl)-thiazole from 5-(2-hydroxyethyl)-4-methylthiazole: step 1/1. In terms of biological role, catalyzes the phosphorylation of the hydroxyl group of 4-methyl-5-beta-hydroxyethylthiazole (THZ). This Escherichia coli O7:K1 (strain IAI39 / ExPEC) protein is Hydroxyethylthiazole kinase.